We begin with the raw amino-acid sequence, 311 residues long: Cytochrome f (311 aa).

An N-terminal signal peptide occupies residues M1–A27. Heme-binding residues include Y28, C48, C51, and H52. A helical transmembrane segment spans residues I277 to K297.

Belongs to the cytochrome f family. In terms of assembly, the 4 large subunits of the cytochrome b6-f complex are cytochrome b6, subunit IV (17 kDa polypeptide, PetD), cytochrome f and the Rieske protein, while the 4 small subunits are PetG, PetL, PetM and PetN. The complex functions as a dimer. Requires heme as cofactor.

It is found in the cellular thylakoid membrane. Functionally, component of the cytochrome b6-f complex, which mediates electron transfer between photosystem II (PSII) and photosystem I (PSI), cyclic electron flow around PSI, and state transitions. The protein is Cytochrome f of Parasynechococcus marenigrum (strain WH8102).